A 396-amino-acid polypeptide reads, in one-letter code: Obg-like ATPase 1 (396 aa).

An OBG-type G domain is found at 23-283 (LKIGIVGLPN…LSAEERQKYL (261 aa)). 32-37 (NVGKST) is a binding site for ATP. Residues Ser-36 and Thr-56 each coordinate Mg(2+). Leu-231 contacts ATP. The short motif at 267–274 (LELRLQEL) is the Nuclear export signal element. The residue at position 294 (Lys-294) is an N6-acetyllysine. The region spanning 304-387 (QLEYFFTAGP…EDGDIIFFKF (84 aa)) is the TGS domain.

The protein belongs to the TRAFAC class OBG-HflX-like GTPase superfamily. OBG GTPase family. YchF/OLA1 subfamily. Monomer. Mg(2+) serves as cofactor.

The protein localises to the cytoplasm. It is found in the nucleus. The protein resides in the nucleolus. Its function is as follows. Hydrolyzes ATP, and can also hydrolyze GTP with lower efficiency. Has lower affinity for GTP. In Bos taurus (Bovine), this protein is Obg-like ATPase 1.